The primary structure comprises 282 residues: ATP phosphoribosyltransferase (282 aa).

Belongs to the ATP phosphoribosyltransferase family. Long subfamily. Requires Mg(2+) as cofactor.

Its subcellular location is the cytoplasm. The enzyme catalyses 1-(5-phospho-beta-D-ribosyl)-ATP + diphosphate = 5-phospho-alpha-D-ribose 1-diphosphate + ATP. The protein operates within amino-acid biosynthesis; L-histidine biosynthesis; L-histidine from 5-phospho-alpha-D-ribose 1-diphosphate: step 1/9. With respect to regulation, feedback inhibited by histidine. Functionally, catalyzes the condensation of ATP and 5-phosphoribose 1-diphosphate to form N'-(5'-phosphoribosyl)-ATP (PR-ATP). Has a crucial role in the pathway because the rate of histidine biosynthesis seems to be controlled primarily by regulation of HisG enzymatic activity. This is ATP phosphoribosyltransferase from Haloarcula marismortui (strain ATCC 43049 / DSM 3752 / JCM 8966 / VKM B-1809) (Halobacterium marismortui).